The sequence spans 538 residues: CTP synthase (538 aa).

Residues 1 to 266 (MKTKFIFVTG…DDQVVDKLNI (266 aa)) form an amidoligase domain region. A CTP-binding site is contributed by Ser14. Residue Ser14 coordinates UTP. ATP is bound by residues 15–20 (SIGKGL) and Asp72. Positions 72 and 140 each coordinate Mg(2+). Residues 147 to 149 (DIE), 187 to 192 (KTKPTQ), and Lys223 each bind CTP. UTP is bound by residues 187–192 (KTKPTQ) and Lys223. The Glutamine amidotransferase type-1 domain occupies 292-534 (HIAIVGKYVN…IAAALEHRGK (243 aa)). An L-glutamine-binding site is contributed by Gly354. Cys381 functions as the Nucleophile; for glutamine hydrolysis in the catalytic mechanism. L-glutamine-binding positions include 382 to 385 (LGMQ), Glu405, and Arg462. Catalysis depends on residues His507 and Glu509.

It belongs to the CTP synthase family. Homotetramer.

The enzyme catalyses UTP + L-glutamine + ATP + H2O = CTP + L-glutamate + ADP + phosphate + 2 H(+). It catalyses the reaction L-glutamine + H2O = L-glutamate + NH4(+). It carries out the reaction UTP + NH4(+) + ATP = CTP + ADP + phosphate + 2 H(+). It functions in the pathway pyrimidine metabolism; CTP biosynthesis via de novo pathway; CTP from UDP: step 2/2. With respect to regulation, allosterically activated by GTP, when glutamine is the substrate; GTP has no effect on the reaction when ammonia is the substrate. The allosteric effector GTP functions by stabilizing the protein conformation that binds the tetrahedral intermediate(s) formed during glutamine hydrolysis. Inhibited by the product CTP, via allosteric rather than competitive inhibition. Its function is as follows. Catalyzes the ATP-dependent amination of UTP to CTP with either L-glutamine or ammonia as the source of nitrogen. Regulates intracellular CTP levels through interactions with the four ribonucleotide triphosphates. The chain is CTP synthase from Geobacter metallireducens (strain ATCC 53774 / DSM 7210 / GS-15).